A 100-amino-acid polypeptide reads, in one-letter code: Small ribosomal subunit protein uS14c (100 aa).

Residues 1-31 are disordered; sequence MARKSLIQREKKRQKLEQKYHSIRRSSKKEI.

This sequence belongs to the universal ribosomal protein uS14 family. Part of the 30S ribosomal subunit.

The protein resides in the plastid. It is found in the chloroplast. Binds 16S rRNA, required for the assembly of 30S particles. The protein is Small ribosomal subunit protein uS14c of Nicotiana tomentosiformis (Tobacco).